We begin with the raw amino-acid sequence, 154 residues long: MANKTQLRVEAINNGTVIDHIPANIGIKVLKLFQMDKSAERVTVGLNLPSSALGAKDLLKIENTFITPEQASKLALYAPHATVNQIENYEVVKKIPLVLPEQITGVFECPNSNCITHGEPVDSSFKVLTKKEDIHLKCKYCEKVYSREVVTDLN.

Residues Cys109, Cys114, Cys138, and Cys141 each contribute to the Zn(2+) site.

It belongs to the PyrI family. In terms of assembly, contains catalytic and regulatory chains. Zn(2+) is required as a cofactor.

Its function is as follows. Involved in allosteric regulation of aspartate carbamoyltransferase. This chain is Aspartate carbamoyltransferase regulatory chain, found in Aliivibrio fischeri (strain ATCC 700601 / ES114) (Vibrio fischeri).